A 207-amino-acid polypeptide reads, in one-letter code: MQIPFQRALRLCLRAALAAIASAAHADDGTIVITGTITDTTCVIEDPSGPNHTKVVQLPKISKNALKANGDQAGRTPFIIKLKDCPSSLGNGVKAYFEPGPTTDYSTGDLRAYKMVYATNPQTQLSNITAATEAQGVQVRISNLNDSKITMGANEATQQAAGFDPEVQTGGTSRTVTMRYLASYVKKNGDVEASAITTYVGFSVVYP.

An N-terminal signal peptide occupies residues 1 to 26; sequence MQIPFQRALRLCLRAALAAIASAAHA. A disulfide bridge links cysteine 42 with cysteine 85.

It belongs to the fimbrial protein family.

The protein resides in the fimbrium. Functionally, bordetella pertussis is the causative agent of whooping cough. An essential step in the disease process is the attachment of the bacteria to the ciliated epithelium of the respiratory tract, enabling the organism to resist normal host-clearance mechanisms. It is unclear which bacterial cell surface component are responsible for adherence but the fimbriae of B.pertussis are prime candidates for being involved in this process. The polypeptide is Serotype 2 fimbrial subunit (fim2) (Bordetella pertussis (strain Tohama I / ATCC BAA-589 / NCTC 13251)).